The chain runs to 353 residues: Protein AC18 (353 aa).

It localises to the host nucleus. Its subcellular location is the host cytoplasm. Its function is as follows. May play a role in occlusion-derived virions (ODV) formation and/or regulation of late viral gene expression. The polypeptide is Protein AC18 (DA41) (Autographa californica nuclear polyhedrosis virus (AcMNPV)).